Reading from the N-terminus, the 367-residue chain is GTP cyclohydrolase FolE2 (367 aa).

Belongs to the GTP cyclohydrolase IV family.

The catalysed reaction is GTP + H2O = 7,8-dihydroneopterin 3'-triphosphate + formate + H(+). Its pathway is cofactor biosynthesis; 7,8-dihydroneopterin triphosphate biosynthesis; 7,8-dihydroneopterin triphosphate from GTP: step 1/1. Its function is as follows. Converts GTP to 7,8-dihydroneopterin triphosphate. The polypeptide is GTP cyclohydrolase FolE2 (Dinoroseobacter shibae (strain DSM 16493 / NCIMB 14021 / DFL 12)).